The chain runs to 210 residues: Urease accessory protein UreF (210 aa).

The protein belongs to the UreF family. UreD, UreF and UreG form a complex that acts as a GTP-hydrolysis-dependent molecular chaperone, activating the urease apoprotein by helping to assemble the nickel containing metallocenter of UreC. The UreE protein probably delivers the nickel.

It localises to the cytoplasm. Functionally, required for maturation of urease via the functional incorporation of the urease nickel metallocenter. The chain is Urease accessory protein UreF from Cereibacter sphaeroides (strain KD131 / KCTC 12085) (Rhodobacter sphaeroides).